Reading from the N-terminus, the 287-residue chain is Hydroxyethylthiazole kinase (287 aa).

M50 is a substrate binding site. Residues R126 and S185 each coordinate ATP. G212 contacts substrate.

This sequence belongs to the Thz kinase family. The cofactor is Mg(2+).

The catalysed reaction is 5-(2-hydroxyethyl)-4-methylthiazole + ATP = 4-methyl-5-(2-phosphooxyethyl)-thiazole + ADP + H(+). It participates in cofactor biosynthesis; thiamine diphosphate biosynthesis; 4-methyl-5-(2-phosphoethyl)-thiazole from 5-(2-hydroxyethyl)-4-methylthiazole: step 1/1. Its function is as follows. Catalyzes the phosphorylation of the hydroxyl group of 4-methyl-5-beta-hydroxyethylthiazole (THZ). The chain is Hydroxyethylthiazole kinase from Methanobrevibacter smithii (strain ATCC 35061 / DSM 861 / OCM 144 / PS).